The chain runs to 1945 residues: Rho GTPase-activating protein 21 (1945 aa).

Residues 26 to 53 form a disordered region; it reads CEVSKNKDGKDQGEPVSPSEDEPFSWPG. Residues 29-38 are compositionally biased toward basic and acidic residues; it reads SKNKDGKDQG. Serine 42 and serine 63 each carry phosphoserine. A PDZ domain is found at 56–165; sequence TVMLKRTSQG…TLELSVMPKD (110 aa). Disordered regions lie at residues 210 to 229 and 326 to 365; these read TAQPVETCPPDSLPNKQQTS and HQTTGSRSLEPSGILLKSGNYSGHSEGISSSRSQAVDSPP. Low complexity predominate over residues 347–358; the sequence is SGHSEGISSSRS. The residue at position 454 (serine 454) is a Phosphoserine. Residues 499-512 are compositionally biased toward polar residues; it reads EATATVNSESQIPD. The interval 499-519 is disordered; sequence EATATVNSESQIPDSNGERKQ. Omega-N-methylarginine is present on residues arginine 549 and arginine 569. Disordered regions lie at residues 573-647 and 674-702; these read PVSQ…RPVN and EVSSCLPGTSAKTSPQLSENLGTSDLELP. The segment covering 589-600 has biased composition (polar residues); the sequence is SNRNFPTTTGVS. Residues serine 610 and serine 619 each carry the phosphoserine modification. The segment covering 674–696 has biased composition (polar residues); the sequence is EVSSCLPGTSAKTSPQLSENLGT. A Phosphothreonine modification is found at threonine 741. Phosphoserine is present on residues serine 851, serine 856, and serine 875. 2 disordered regions span residues 852-879 and 902-921; these read HDQESVGPPSLDGQHSSKTERSKSYDEG and ITDSQKSSEDSGSRKGSSSE. Residues 866-879 show a composition bias toward basic and acidic residues; sequence HSSKTERSKSYDEG. Position 876 is a phosphotyrosine (tyrosine 876). Phosphoserine is present on residues serine 918, serine 920, serine 948, serine 1093, and serine 1109. The segment at 924–1091 is interaction with ARF1 and ARF6; that stretch reads SDAAREGWLQ…AKSEPKTQSP (168 aa). The 110-residue stretch at 925-1034 folds into the PH domain; the sequence is DAAREGWLQF…WIKTIQESSN (110 aa). The tract at residues 1080 to 1120 is disordered; that stretch reads LGAKSEPKTQSPHSPKEESERKLLSKDDTSPPKDKGTWRRG. The span at 1093-1116 shows a compositional bias: basic and acidic residues; sequence SPKEESERKLLSKDDTSPPKDKGT. The Rho-GAP domain maps to 1141 to 1333; sequence VRLDDCPPAH…TLIQHHDWFF (193 aa). 4 disordered regions span residues 1373–1396, 1412–1632, 1649–1794, and 1846–1945; these read PGDVSDSATSDSAKSKGSWGSGKD, SRKR…PVFP, ARVS…LGGH, and RTSA…ETPP. Positions 1377–1395 are enriched in low complexity; it reads SDSATSDSAKSKGSWGSGK. Serine 1412, serine 1426, and serine 1427 each carry phosphoserine. 2 stretches are compositionally biased toward basic and acidic residues: residues 1435–1457 and 1471–1488; these read FFKKENTEQSHSEIKEESKRESE and SNTKKDSGTTKEEKKIPW. Residue lysine 1438 forms a Glycyl lysine isopeptide (Lys-Gly) (interchain with G-Cter in SUMO) linkage. A Phosphothreonine modification is found at threonine 1504. 2 stretches are compositionally biased toward low complexity: residues 1531-1556 and 1569-1589; these read SDSGTLLSTSSQASLLRSSTKKSTSP and TTTSDYSTTSSTTYLTSLDSS. The tract at residues 1579–1848 is interaction with CTNNA1; sequence STTYLTSLDS…WLARERVRTS (270 aa). Residues 1590–1599 are compositionally biased toward polar residues; it reads RLSPEVQSVA. The segment covering 1611–1621 has biased composition (basic and acidic residues); the sequence is SELVSEGRPVE. The residue at position 1656 (serine 1656) is a Phosphoserine. Polar residues-rich tracts occupy residues 1658-1681 and 1729-1738; these read GSEASCTEGSLTPSLDSRRQQFSS and STGSLLTPSR. The residue at position 1669 (threonine 1669) is a Phosphothreonine. Serine 1729 carries the phosphoserine modification. The span at 1739-1757 shows a compositional bias: basic and acidic residues; it reads SESEKQEATWKTKIADRLK. Residues 1782-1792 are compositionally biased toward basic residues; the sequence is RKNIKRRHTLG. Residues 1871–1882 show a composition bias toward polar residues; it reads PISTHSPPSQQP. Residues 1887–1896 are compositionally biased toward low complexity; the sequence is AATSTLASTS. Threonine 1902 carries the post-translational modification Phosphothreonine. Serine 1906 is modified (phosphoserine). The span at 1907–1927 shows a compositional bias: polar residues; that stretch reads PDQINRESFQNMSQNASSTAN. Basic and acidic residues predominate over residues 1932 to 1945; sequence KQSESPDTKAETPP.

In terms of assembly, interacts with CTNNA1. Interacts with GTP-bound ARF1 and probably ARF6. Post-translationally, sumoylated with SUMO2 and SUMO3 in proliferating lymphocytes.

Its subcellular location is the golgi apparatus membrane. The protein resides in the cell junction. It localises to the cytoplasmic vesicle membrane. The protein localises to the cytoplasm. It is found in the cytoskeleton. Functions as a GTPase-activating protein (GAP) for RHOA and CDC42. Downstream partner of ARF1 which may control Golgi apparatus structure and function. Also required for CTNNA1 recruitment to adherens junctions. This is Rho GTPase-activating protein 21 from Mus musculus (Mouse).